Reading from the N-terminus, the 557-residue chain is Dihydroxy-acid dehydratase (557 aa).

Asp78 contacts Mg(2+). Cys119 serves as a coordination point for [2Fe-2S] cluster. Mg(2+)-binding residues include Asp120 and Lys121. Lys121 is subject to N6-carboxylysine. A [2Fe-2S] cluster-binding site is contributed by Cys192. A Mg(2+)-binding site is contributed by Glu442. Ser468 functions as the Proton acceptor in the catalytic mechanism.

It belongs to the IlvD/Edd family. Homodimer. [2Fe-2S] cluster serves as cofactor. The cofactor is Mg(2+).

It carries out the reaction (2R)-2,3-dihydroxy-3-methylbutanoate = 3-methyl-2-oxobutanoate + H2O. The catalysed reaction is (2R,3R)-2,3-dihydroxy-3-methylpentanoate = (S)-3-methyl-2-oxopentanoate + H2O. It functions in the pathway amino-acid biosynthesis; L-isoleucine biosynthesis; L-isoleucine from 2-oxobutanoate: step 3/4. It participates in amino-acid biosynthesis; L-valine biosynthesis; L-valine from pyruvate: step 3/4. Its function is as follows. Functions in the biosynthesis of branched-chain amino acids. Catalyzes the dehydration of (2R,3R)-2,3-dihydroxy-3-methylpentanoate (2,3-dihydroxy-3-methylvalerate) into 2-oxo-3-methylpentanoate (2-oxo-3-methylvalerate) and of (2R)-2,3-dihydroxy-3-methylbutanoate (2,3-dihydroxyisovalerate) into 2-oxo-3-methylbutanoate (2-oxoisovalerate), the penultimate precursor to L-isoleucine and L-valine, respectively. The polypeptide is Dihydroxy-acid dehydratase (Bacillus cereus (strain ATCC 10987 / NRS 248)).